The sequence spans 309 residues: Olfactory receptor 10V1 (309 aa).

Over 1 to 25 (MEGINKTAKMQFFFRPFSPDPEVQM) the chain is Extracellular. Asn5 carries N-linked (GlcNAc...) asparagine glycosylation. Residues 26–46 (LIFVVFLMMYLTSLGGNATIA) traverse the membrane as a helical segment. Over 47-54 (VIVQINHS) the chain is Cytoplasmic. A helical transmembrane segment spans residues 55 to 75 (LHTPMYFFLANLAVLEIFYTS). The Extracellular segment spans residues 76–100 (SITPLALANLLSMGKTPVSITGCGT). A disulfide bridge links Cys98 with Cys190. The chain crosses the membrane as a helical span at residues 101–121 (QMFFFVFLGGADCVLLVVMAY). Over 122–140 (DQFIAICHPLRYRLIMSWS) the chain is Cytoplasmic. A helical transmembrane segment spans residues 141–161 (LCVELLVGSLVLGFLLSLPLT). The Extracellular portion of the chain corresponds to 162–198 (ILIFHLPFCHNDEIYHFYCDMPAVMRLACADTRVHKT). The helical transmembrane segment at 199-218 (ALYIISFIVLSIPLSLISIS) threads the bilayer. Over 219–238 (YVFIVVAILRIRSAEGRQQA) the chain is Cytoplasmic. The chain crosses the membrane as a helical span at residues 239–259 (YSTCSSHILVVLLQYGCTSFI). Over 260-272 (YLSPSSSYSPEMG) the chain is Extracellular. The helical transmembrane segment at 273–293 (RVVSVAYTFITPILNPLIYSL) threads the bilayer. Over 294–309 (RNKELKDALRKALRKF) the chain is Cytoplasmic.

The protein belongs to the G-protein coupled receptor 1 family.

The protein resides in the cell membrane. Its function is as follows. Odorant receptor. The chain is Olfactory receptor 10V1 (OR10V1) from Homo sapiens (Human).